Reading from the N-terminus, the 226-residue chain is ATP synthase F(0) complex subunit a (226 aa).

The next 5 membrane-spanning stretches (helical) occupy residues 5–25, 68–88, 97–117, 136–156, and 189–209; these read LFAP…LIII, WSLM…LGML, QLSM…TTGF, FLIP…PVAW, and AFIT…VALI.

Belongs to the ATPase A chain family. As to quaternary structure, component of the ATP synthase complex composed at least of ATP5F1A/subunit alpha, ATP5F1B/subunit beta, ATP5MC1/subunit c (homooctomer), MT-ATP6/subunit a, MT-ATP8/subunit 8, ATP5ME/subunit e, ATP5MF/subunit f, ATP5MG/subunit g, ATP5MK/subunit k, ATP5MJ/subunit j, ATP5F1C/subunit gamma, ATP5F1D/subunit delta, ATP5F1E/subunit epsilon, ATP5PF/subunit F6, ATP5PB/subunit b, ATP5PD/subunit d, ATP5PO/subunit OSCP. ATP synthase complex consists of a soluble F(1) head domain (subunits alpha(3) and beta(3)) - the catalytic core - and a membrane F(0) domain - the membrane proton channel (subunits c, a, 8, e, f, g, k and j). These two domains are linked by a central stalk (subunits gamma, delta, and epsilon) rotating inside the F1 region and a stationary peripheral stalk (subunits F6, b, d, and OSCP). Interacts with DNAJC30; interaction is direct.

It is found in the mitochondrion inner membrane. It catalyses the reaction H(+)(in) = H(+)(out). In terms of biological role, subunit a, of the mitochondrial membrane ATP synthase complex (F(1)F(0) ATP synthase or Complex V) that produces ATP from ADP in the presence of a proton gradient across the membrane which is generated by electron transport complexes of the respiratory chain. ATP synthase complex consist of a soluble F(1) head domain - the catalytic core - and a membrane F(1) domain - the membrane proton channel. These two domains are linked by a central stalk rotating inside the F(1) region and a stationary peripheral stalk. During catalysis, ATP synthesis in the catalytic domain of F(1) is coupled via a rotary mechanism of the central stalk subunits to proton translocation. With the subunit c (ATP5MC1), forms the proton-conducting channel in the F(0) domain, that contains two crucial half-channels (inlet and outlet) that facilitate proton movement from the mitochondrial intermembrane space (IMS) into the matrix. Protons are taken up via the inlet half-channel and released through the outlet half-channel, following a Grotthuss mechanism. This Balaenoptera physalus (Fin whale) protein is ATP synthase F(0) complex subunit a.